The following is a 286-amino-acid chain: Polyamine aminopropyltransferase (286 aa).

The region spanning 5–238 (TMWHETLHDQ…GIMTFAWATD (234 aa)) is the PABS domain. Position 33 (Gln33) interacts with S-methyl-5'-thioadenosine. His64 and Asp88 together coordinate spermidine. Residues Glu108 and 140-141 (DG) each bind S-methyl-5'-thioadenosine. Residue Asp158 is the Proton acceptor of the active site. Spermidine is bound at residue 158-161 (DCTD). Residue Pro165 participates in S-methyl-5'-thioadenosine binding.

Belongs to the spermidine/spermine synthase family. Homodimer or homotetramer.

Its subcellular location is the cytoplasm. It carries out the reaction S-adenosyl 3-(methylsulfanyl)propylamine + putrescine = S-methyl-5'-thioadenosine + spermidine + H(+). Its pathway is amine and polyamine biosynthesis; spermidine biosynthesis; spermidine from putrescine: step 1/1. Its function is as follows. Catalyzes the irreversible transfer of a propylamine group from the amino donor S-adenosylmethioninamine (decarboxy-AdoMet) to putrescine (1,4-diaminobutane) to yield spermidine. This is Polyamine aminopropyltransferase from Salmonella typhi.